Reading from the N-terminus, the 178-residue chain is ATP synthase subunit delta (178 aa).

It belongs to the ATPase delta chain family. As to quaternary structure, F-type ATPases have 2 components, F(1) - the catalytic core - and F(0) - the membrane proton channel. F(1) has five subunits: alpha(3), beta(3), gamma(1), delta(1), epsilon(1). F(0) has three main subunits: a(1), b(2) and c(10-14). The alpha and beta chains form an alternating ring which encloses part of the gamma chain. F(1) is attached to F(0) by a central stalk formed by the gamma and epsilon chains, while a peripheral stalk is formed by the delta and b chains.

It localises to the cell membrane. F(1)F(0) ATP synthase produces ATP from ADP in the presence of a proton or sodium gradient. F-type ATPases consist of two structural domains, F(1) containing the extramembraneous catalytic core and F(0) containing the membrane proton channel, linked together by a central stalk and a peripheral stalk. During catalysis, ATP synthesis in the catalytic domain of F(1) is coupled via a rotary mechanism of the central stalk subunits to proton translocation. Its function is as follows. This protein is part of the stalk that links CF(0) to CF(1). It either transmits conformational changes from CF(0) to CF(1) or is implicated in proton conduction. This Buchnera aphidicola subsp. Baizongia pistaciae (strain Bp) protein is ATP synthase subunit delta.